The following is a 913-amino-acid chain: DNA mismatch repair protein MutS (913 aa).

A disordered region spans residues 18 to 50 (NNKQKEKTKIPEDLSLEDLKKESQKRPRQRKNS). Positions 19–42 (NKQKEKTKIPEDLSLEDLKKESQK) are enriched in basic and acidic residues. ATP is bound at residue 720 to 727 (GPNASGKS).

It belongs to the DNA mismatch repair MutS family.

This protein is involved in the repair of mismatches in DNA. It is possible that it carries out the mismatch recognition step. This protein has a weak ATPase activity. This Prochlorococcus marinus (strain MIT 9301) protein is DNA mismatch repair protein MutS.